Here is a 616-residue protein sequence, read N- to C-terminus: Homeodomain-interacting protein kinase 4 (616 aa).

The Protein kinase domain occupies 11 to 347 (YDIIEVLGKG…PSAALRHPFV (337 aa)). ATP-binding positions include 17–25 (LGKGTFGEV) and lysine 40. Aspartate 136 serves as the catalytic Proton acceptor. The segment at 487–616 (HKARKAPAGS…SFLQHVGGHH (130 aa)) is disordered. Positions 497–512 (KSDSNFSNLIRLSQAS) are enriched in polar residues. Position 512 is a phosphoserine (serine 512). Positions 542–560 (REGDGPGIKDRPMDAERPG) are enriched in basic and acidic residues.

It belongs to the protein kinase superfamily. CMGC Ser/Thr protein kinase family. HIPK subfamily. In terms of processing, autophosphorylated. In terms of tissue distribution, expressed at moderate levels in lung and white adipose tissues and weakly in brain and liver.

The protein resides in the cytoplasm. The enzyme catalyses L-seryl-[protein] + ATP = O-phospho-L-seryl-[protein] + ADP + H(+). It carries out the reaction L-threonyl-[protein] + ATP = O-phospho-L-threonyl-[protein] + ADP + H(+). Protein kinase that phosphorylates murine TP53 at Ser-9, and thus induces TP53 repression of BIRC5 promoter. May act as a corepressor of transcription factors (Potential). This Mus musculus (Mouse) protein is Homeodomain-interacting protein kinase 4 (Hipk4).